Reading from the N-terminus, the 357-residue chain is Alkanal monooxygenase alpha chain (357 aa).

The protein belongs to the bacterial luciferase oxidoreductase family. In terms of assembly, heterodimer of an alpha and a beta chain.

It carries out the reaction a long-chain fatty aldehyde + FMNH2 + O2 = a long-chain fatty acid + hnu + FMN + H2O + 2 H(+). Functionally, light-emitting reaction in luminous bacteria. In Kryptophanaron alfredi symbiont, this protein is Alkanal monooxygenase alpha chain (luxA).